Reading from the N-terminus, the 257-residue chain is Protein IMPACT homolog (257 aa).

The RWD domain maps to 9-102 (AEIESLASIF…SLVQDFIRDL (94 aa)).

This sequence belongs to the IMPACT family. As to quaternary structure, interacts with gcn-1; prevents the interaction of gcn-1 with gcn-2 and inhibits gcn-2 kinase activity. Interaction with rpl-39; this interaction occurs in a gcn-1-independent manner. Associates with ribosomes; this interaction occurs in a gcn-1-independent manner. Associates with actin; this interaction occurs in a gcn-1-independent manner.

It is found in the cytoplasm. Functionally, translational regulator that ensures constant high levels of translation under amino acid starvation. Plays a role as a negative regulator of the gcn-2 kinase activity; impairs gcn-1-mediated gcn-2 activation, and hence gcn-2-mediated eIF-2-alpha phosphorylation and subsequent down-regulation of protein synthesis in amino acid-starved cells. Plays a role in differentiation of neuronal cells by stimulating neurite outgrowth. In Caenorhabditis elegans, this protein is Protein IMPACT homolog.